A 303-amino-acid chain; its full sequence is Cathepsin B-like CP1 (303 aa).

The first 19 residues, 1–19 (MALSLLLAVVCAKPLVSRA), serve as a signal peptide directing secretion. A glycan (N-linked (GlcNAc...) asparagine) is linked at asparagine 41. 3 disulfides stabilise this stretch: cysteine 92–cysteine 119, cysteine 102–cysteine 145, and cysteine 138–cysteine 181. The active site involves cysteine 105. Active-site residues include histidine 249 and asparagine 270.

This sequence belongs to the peptidase C1 family.

It localises to the vacuole. Thiol protease which is required for parasite excystation and invasion of the proximal small intestine of the human host. The sequence is that of Cathepsin B-like CP1 (CP1) from Giardia intestinalis (Giardia lamblia).